The following is a 473-amino-acid chain: Photosystem II CP43 reaction center protein (473 aa).

Positions 1-14 are excised as a propeptide; that stretch reads MKILYSLRRFYHVE. An N-acetylthreonine modification is found at T15. T15 is modified (phosphothreonine). 5 helical membrane-spanning segments follow: residues 69–93, 134–155, 178–200, 255–275, and 291–312; these read LFEV…PHLA, LLGP…KDRN, KALY…RKIT, KPFA…LSYS, and WFNN…ASQA. Residue E367 coordinates [CaMn4O5] cluster. Residues 447–471 traverse the membrane as a helical segment; it reads RARAAAAGFEKGIDRDLEPVLYMNP.

Belongs to the PsbB/PsbC family. PsbC subfamily. In terms of assembly, PSII is composed of 1 copy each of membrane proteins PsbA, PsbB, PsbC, PsbD, PsbE, PsbF, PsbH, PsbI, PsbJ, PsbK, PsbL, PsbM, PsbT, PsbX, PsbY, PsbZ, Psb30/Ycf12, at least 3 peripheral proteins of the oxygen-evolving complex and a large number of cofactors. It forms dimeric complexes. Binds multiple chlorophylls and provides some of the ligands for the Ca-4Mn-5O cluster of the oxygen-evolving complex. It may also provide a ligand for a Cl- that is required for oxygen evolution. PSII binds additional chlorophylls, carotenoids and specific lipids. serves as cofactor.

The protein resides in the plastid. It is found in the chloroplast thylakoid membrane. Its function is as follows. One of the components of the core complex of photosystem II (PSII). It binds chlorophyll and helps catalyze the primary light-induced photochemical processes of PSII. PSII is a light-driven water:plastoquinone oxidoreductase, using light energy to abstract electrons from H(2)O, generating O(2) and a proton gradient subsequently used for ATP formation. In Hordeum vulgare (Barley), this protein is Photosystem II CP43 reaction center protein.